A 273-amino-acid chain; its full sequence is HUWE1-associated protein modifying stress responses 2 (273 aa).

Disordered stretches follow at residues 146–181, 204–230, and 251–273; these read GKVP…SSSV, ISMR…FLED, and KRTS…NRMV. A compositionally biased stretch (pro residues) spans 149–165; that stretch reads PPAPPPPRTPRTPPKPP. Polar residues-rich tracts occupy residues 170–181, 208–218, and 254–267; these read SQAVATESSSSV, SGDSPQDSGVA, and SAQC…SPIQ. The tract at residues 249 to 273 is nuclear localization signal; the sequence is IRKRTSAQCSDGITDSPIQKRNRMV.

Belongs to the HAPSTR1 family. Homooligomer. Heterooligomer with HAPSTR1; the interaction is direct and stabilizes HAPSTR1 independently of HUWE1. Interacts with HUWE1. Expressed in a tissue-restricted manner compared to HAPSTR1.

It localises to the nucleus. Functionally, together with HAPSTR1 plays a central regulatory role in the cellular response to molecular stressors, such as DNA damage, nutrient scarcity, and protein misfolding. Regulates these multiple stress response signaling pathways by stabilizing HAPSTR1, but also independently of HAPSTR1. This chain is HUWE1-associated protein modifying stress responses 2, found in Homo sapiens (Human).